Reading from the N-terminus, the 308-residue chain is Neurexophilin-4 (308 aa).

The signal sequence occupies residues 1–23; it reads MRLLPEWFLLLFGPWLLRKAVSA. The tract at residues 24-84 is II; it reads QIPESGRPQY…GALARAGAAG (61 aa). Residues 40 to 51 show a composition bias toward low complexity; that stretch reads AAGAGAPGQQLP. The disordered stretch occupies residues 40-59; it reads AAGAGAPGQQLPEPRSSDGL. Asn-72, Asn-133, Asn-143, and Asn-149 each carry an N-linked (GlcNAc...) asparagine glycan. The III stretch occupies residues 85–163; that stretch reads ALPAQRTKRK…IVPPSKRVEF (79 aa). Residues 164-224 are IV (linker domain); the sequence is GGVWLPGPVP…PLGGALGVPG (61 aa). The v (Cys-rich) stretch occupies residues 225–308; it reads AKESRAFNCH…NFQSEHPYFG (84 aa).

This sequence belongs to the neurexophilin family. May be proteolytically processed at the boundary between the N-terminal non-conserved and the central conserved domain in neuron-like cells. As to expression, expressed in brain, spleen, and testis.

Its subcellular location is the secreted. In terms of biological role, may be signaling molecules that resemble neuropeptides and that act by binding to alpha-neurexins and possibly other receptors. The polypeptide is Neurexophilin-4 (NXPH4) (Homo sapiens (Human)).